We begin with the raw amino-acid sequence, 593 residues long: Pentatricopeptide repeat-containing protein At5g24830 (593 aa).

PPR repeat units lie at residues 120–154 (CLSI…GVIP), 155–189 (GLIT…GPSP), 190–224 (NCVS…GIRP), 225–256 (NRVT…ILDS), 264–298 (DIVI…NVPA), 299–333 (DSVV…GVNP), 334–368 (DVFT…GVAP), 369–403 (DQIS…SLLP), 404–438 (EVLL…GVKP), 439–473 (NVYT…KIHP), 474–508 (DTTT…GCQP), and 509–543 (DIIT…GITI).

Belongs to the PPR family. P subfamily.

The sequence is that of Pentatricopeptide repeat-containing protein At5g24830 from Arabidopsis thaliana (Mouse-ear cress).